The chain runs to 537 residues: ESX-2 secretion system protein EccE2 (537 aa).

The chain crosses the membrane as a helical span at residues 31–51; it reads ALGGQLGAVMAVVVGVALVFV.

It belongs to the EccE family. As to quaternary structure, could be part of the ESX-2 / type VII secretion system (T7SS), which is composed of cytosolic and membrane components.

The protein resides in the cell membrane. This is ESX-2 secretion system protein EccE2 (eccE2) from Mycobacterium tuberculosis (strain CDC 1551 / Oshkosh).